The following is a 461-amino-acid chain: Cysteine--tRNA ligase (461 aa).

Cys30 lines the Zn(2+) pocket. The short motif at 32 to 42 (PTVYSYAHIGN) is the 'HIGH' region element. The Zn(2+) site is built by Cys212, His237, and Glu241. Positions 270 to 274 (KMSKS) match the 'KMSKS' region motif. Lys273 contributes to the ATP binding site.

This sequence belongs to the class-I aminoacyl-tRNA synthetase family. Monomer. Requires Zn(2+) as cofactor.

The protein resides in the cytoplasm. It carries out the reaction tRNA(Cys) + L-cysteine + ATP = L-cysteinyl-tRNA(Cys) + AMP + diphosphate. This is Cysteine--tRNA ligase from Maricaulis maris (strain MCS10) (Caulobacter maris).